The sequence spans 260 residues: Taurine import ATP-binding protein TauB (260 aa).

An ABC transporter domain is found at 6–235 (AQQVSVVYAS…RYAHGEPVRS (230 aa)). 40-47 (GASGCGKS) lines the ATP pocket.

The protein belongs to the ABC transporter superfamily. Taurine importer (TC 3.A.1.17.1) family. As to quaternary structure, the complex is composed of two ATP-binding proteins (TauB), two transmembrane proteins (TauC) and a solute-binding protein (TauA).

It is found in the cell inner membrane. The enzyme catalyses taurine(out) + ATP + H2O = taurine(in) + ADP + phosphate + H(+). In terms of biological role, part of the ABC transporter complex TauABC involved in taurine import. Responsible for energy coupling to the transport system. This is Taurine import ATP-binding protein TauB from Burkholderia pseudomallei (strain K96243).